The primary structure comprises 307 residues: uncharacterized protein (307 aa).

The HTH lysR-type domain occupies 11-68; sequence IRLRHLHTFVAVAQQGTLGRAAETLNLSQPALSKTLNELEQLTGARLFERGRQGAQLT. The H-T-H motif DNA-binding region spans 28-47; the sequence is LGRAAETLNLSQPALSKTLN.

It belongs to the LysR transcriptional regulatory family.

This is an uncharacterized protein from Escherichia coli (strain K12).